A 343-amino-acid polypeptide reads, in one-letter code: Coiled-coil domain-containing protein 97 (343 aa).

Met1 bears the N-acetylmethionine mark. The disordered stretch occupies residues 1-37 (MEAVATATAAKEPDKGCIEPGPGHWGELSRTPVPSKP). Thr47 is subject to Phosphothreonine. Disordered stretches follow at residues 200–220 (ARTP…ACPL), 234–277 (QQRL…DSEE), and 292–343 (RFLD…LDGD). The stretch at 224–262 (LLQSYEERELQQRLLQQQEEEEACLEEEEEEEDSDEEDQ) forms a coiled coil. Over residues 241–261 (QEEEEACLEEEEEEEDSDEED) the composition is skewed to acidic residues. A compositionally biased stretch (basic and acidic residues) spans 262–277 (QRSGKDSEAWVPDSEE). A phosphoserine mark is found at Ser275 and Ser337. Residues 324 to 343 (ERYFDEEEPEDAPSPELDGD) show a composition bias toward acidic residues.

As to quaternary structure, associates with splicing factor SF3B complex, involved in branch-site recognition.

The protein localises to the nucleus. May play a role pre-mRNA splicing through the association with the splicing factor SF3B complex which is involved in branch-site recognition. In Homo sapiens (Human), this protein is Coiled-coil domain-containing protein 97 (CCDC97).